The following is a 483-amino-acid chain: NADH-quinone oxidoreductase subunit N (483 aa).

14 helical membrane passes run 13–33, 39–57, 76–96, 110–130, 131–151, 165–185, 206–226, 240–260, 277–297, 302–322, 330–350, 373–393, 406–426, and 459–479; these read ALPEIFVLAMVSLILVIDAAV, YLAYGLSLVTLAGAAFLTV, PLSDVLKLFLYLTVAIVLVYS, FFVLALFALLGMMVMVSASHF, LTLYLGLELLSLSLYAMVALQ, FVLGALASGMLLYGMSMVYGV, IPLVFGIVFVVAGLAFKLGAV, PTAMTLFVGSAPKIAAFAFVV, MLVILAVLSMAIGNIAAIAQS, MFAYSTISHMGFMLLGVLAGS, MFYVLVYTLMTLGGFGMILLL, LAFVMLLLMFSMTGIPPTVGF, IGYVWLAVAAVLFSLVGAFYY, and LAVLALGILPQPLMAVCVQAI.

It belongs to the complex I subunit 2 family. NDH-1 is composed of 14 different subunits. Subunits NuoA, H, J, K, L, M, N constitute the membrane sector of the complex.

The protein resides in the cell inner membrane. The enzyme catalyses a quinone + NADH + 5 H(+)(in) = a quinol + NAD(+) + 4 H(+)(out). NDH-1 shuttles electrons from NADH, via FMN and iron-sulfur (Fe-S) centers, to quinones in the respiratory chain. The immediate electron acceptor for the enzyme in this species is believed to be ubiquinone. Couples the redox reaction to proton translocation (for every two electrons transferred, four hydrogen ions are translocated across the cytoplasmic membrane), and thus conserves the redox energy in a proton gradient. In Thiobacillus denitrificans (strain ATCC 25259 / T1), this protein is NADH-quinone oxidoreductase subunit N.